The chain runs to 181 residues: MDQQLKAVSKFLSYILRHRPEAISLELNAGGWAAISELIQCASKHDHFLSEEIIKEVVVSNDKKRFKLSEDGQYIRANQGHSIRVDLDLLPLTPPDVLFHGTATRFLASIMAKGLLPSGRQHVHLSASYETAIAVGRRHGKPTVLEINAQKMQGDGYLFYRSENGVWLTDHVPAQYFVEVE.

It belongs to the KptA/TPT1 family.

In terms of biological role, removes the 2'-phosphate from RNA via an intermediate in which the phosphate is ADP-ribosylated by NAD followed by a presumed transesterification to release the RNA and generate ADP-ribose 1''-2''-cyclic phosphate (APPR&gt;P). May function as an ADP-ribosylase. The protein is Probable RNA 2'-phosphotransferase of Acaryochloris marina (strain MBIC 11017).